Consider the following 254-residue polypeptide: Putative cysteine-rich repeat secretory protein 37 (254 aa).

Residues M1–S29 form the signal peptide. Gnk2-homologous domains follow at residues Y36–S138 and Y145–F251.

The protein belongs to the cysteine-rich repeat secretory protein family.

The protein resides in the secreted. The polypeptide is Putative cysteine-rich repeat secretory protein 37 (CRRSP37) (Arabidopsis thaliana (Mouse-ear cress)).